Consider the following 402-residue polypeptide: Xylose/arabinose-binding protein XylF (402 aa).

Residues 38–58 (GIIAGVLAAFGAGFGSGYVTA) form a helical membrane-spanning segment.

This sequence belongs to the bacterial solute-binding protein 2 family. As to quaternary structure, the complex is composed of two ATP-binding proteins (XylG), two transmembrane proteins (XylH) and a solute-binding protein (XylF).

It is found in the cell membrane. In terms of biological role, part of the ABC transporter complex XylFGH involved in the uptake of xylose and arabinose. The polypeptide is Xylose/arabinose-binding protein XylF (Sulfolobus acidocaldarius (strain ATCC 33909 / DSM 639 / JCM 8929 / NBRC 15157 / NCIMB 11770)).